Consider the following 168-residue polypeptide: MKLTSKGRYAVTAMLDVALHSQQNPVPLADISERQGISLSYLEQLFSKLRKAGLVASVRGPGGGYRLGADAHSIAIGTVIAAVDESVDATKCQGKGDCQGGTRCLTHTLWRDLSSRISDFLNNITLGELMKDNEVLEISDRQDIDLAVTHGLSNKNTTAAPIGVNVRS.

The 130-residue stretch at 2–131 (KLTSKGRYAV…NNITLGELMK (130 aa)) folds into the HTH rrf2-type domain. Residues 28–51 (LADISERQGISLSYLEQLFSKLRK) constitute a DNA-binding region (H-T-H motif). Residues C92, C98, and C104 each coordinate [2Fe-2S] cluster.

Requires [2Fe-2S] cluster as cofactor.

In terms of biological role, regulates the transcription of several operons and genes involved in the biogenesis of Fe-S clusters and Fe-S-containing proteins. In Vibrio campbellii (strain ATCC BAA-1116), this protein is HTH-type transcriptional regulator IscR.